Consider the following 482-residue polypeptide: MSILVKNNIHWVGQRDWEVRDFHGTEYKTLRGSSYNSYLIREEKNVLIDTVDHKFSREFVQNLRSEIDLADIDYIIINHAEEDHAGALTELMAQIPDTPIYCTANAIDSITGHHHHPEWNFNVVKTGDTLDIGNGKQLIFVETPMLHWPDSMMTYMTGDAVLFSNDAFGQHYCDERLFNDEVDQTELFEQCQRYYANILTPFSRLVTPKITEILGFNLPVDMIATSHGVVWRDNPTQIVELYLKWAADYQEDRITIFYDTMSNNTRMMADAIAQGINEVDPNVAVKIFNVARSDKNEILTNVFRSKGVLVGTSTMNNVMMPKIAGLVEEMTGLRFRNKRASAFGSHGWSGGAVDRLSTRLQDAGFEMSLSLKAKWRPDIDALELCRQHGRDIARQWALAPLPETNVKATTQEEECACAAAAAADLGPSMQCSVCQWIYDPAKGEPLQDVAPGTPWSDVPDNFLCPECSLGKDVFDVLATEAK.

The zinc metallo-hydrolase stretch occupies residues 30-210 (LRGSSYNSYL…PFSRLVTPKI (181 aa)). The Fe cation site is built by H79, E81, D83, H147, D166, and H227. The region spanning 254–393 (ITIFYDTMSN…LCRQHGRDIA (140 aa)) is the Flavodoxin-like domain. Residues 260–264 (TMSNN) and 342–369 (AFGS…EMSL) each bind FMN. In terms of domain architecture, Rubredoxin-like spans 426–477 (GPSMQCSVCQWIYDPAKGEPLQDVAPGTPWSDVPDNFLCPECSLGKDVFDVL). Residues C431, C434, C464, and C467 each contribute to the Fe cation site.

In the N-terminal section; belongs to the zinc metallo-hydrolase group 3 family. In terms of assembly, homotetramer. Fe cation serves as cofactor. It depends on FMN as a cofactor.

It localises to the cytoplasm. It participates in nitrogen metabolism; nitric oxide reduction. Functionally, anaerobic nitric oxide reductase; uses NADH to detoxify nitric oxide (NO), protecting several 4Fe-4S NO-sensitive enzymes. Has at least 2 reductase partners, only one of which (NorW, flavorubredoxin reductase) has been identified. NO probably binds to the di-iron center; electrons enter from the NorW at rubredoxin and are transferred sequentially to the FMN center and the di-iron center. Also able to function as an aerobic oxygen reductase. This Citrobacter koseri (strain ATCC BAA-895 / CDC 4225-83 / SGSC4696) protein is Anaerobic nitric oxide reductase flavorubredoxin.